The following is a 370-amino-acid chain: Protein FAM110B (370 aa).

2 disordered regions span residues 127-151 (SSEG…RSEA) and 237-256 (KSPE…RPSL). Phosphoserine is present on residues Ser-238 and Ser-301. Positions 317 to 337 (DCEQSQDSNSDLRNDDSANDR) are disordered. Over residues 326 to 335 (SDLRNDDSAN) the composition is skewed to basic and acidic residues.

This sequence belongs to the FAM110 family.

It is found in the cytoplasm. Its subcellular location is the cytoskeleton. The protein localises to the microtubule organizing center. It localises to the centrosome. The sequence is that of Protein FAM110B (FAM110B) from Pongo abelii (Sumatran orangutan).